The sequence spans 634 residues: Extracellular metalloproteinase mep (634 aa).

Residues 1-18 form the signal peptide; it reads MRGLLLAGALALPASVFA. Positions 19–245 are excised as a propeptide; it reads HPAHQSYGLN…IHGVVDYVAE (227 aa). A glycan (N-linked (GlcNAc...) asparagine) is linked at asparagine 286. Histidine 429 serves as a coordination point for Zn(2+). Glutamate 430 is an active-site residue. Histidine 433 is a Zn(2+) binding site.

It belongs to the peptidase M36 family. Requires Zn(2+) as cofactor.

It is found in the secreted. In terms of biological role, secreted metalloproteinase that allows assimilation of proteinaceous substrates and probably acts as a virulence factor. In Aspergillus fumigatus (strain CBS 144.89 / FGSC A1163 / CEA10) (Neosartorya fumigata), this protein is Extracellular metalloproteinase mep (mep).